The sequence spans 416 residues: MDKLLIQGGHRLSGEIAISGAKNAALPILCAGLLTADTVQLSNVPNLQDVTTILRLLRQMGLRAEQDGDKVVLNGSAIDKLEAPYEMVKTMRASILVLGPLLARFGEAKVSLPGGCAIGSRPVDQHIKGLQAMGAEVTIEAGYIHAKAKKLKGTRIVTDMITVTGTENLLMAATLADGETILENAAREPEVTDLANLLVAMGAKIEGIGTDRLVIQGVERLHGATHAVIADRIETATFMCAVATVGGDVTLRNARTDTLDVAFDKLREAGAILTSGDDWIRVQMASRPKAVSFRTTEYPGFPTDMQAQFMAMNCVAEGSSRVIETIFENRFMHVQEMNRLGAAITIEGHTAIINGVDKLVGAPVMATDLRASASLVIAALAAEGETLIDRIYHLDRGYDRMEVKLSAVGAQIQRVK.

22-23 contributes to the phosphoenolpyruvate binding site; sequence KN. Arg-92 is a binding site for UDP-N-acetyl-alpha-D-glucosamine. Catalysis depends on Cys-116, which acts as the Proton donor. Cys-116 carries the 2-(S-cysteinyl)pyruvic acid O-phosphothioketal modification. UDP-N-acetyl-alpha-D-glucosamine contacts are provided by residues 121–125, Asp-304, and Ile-326; that span reads RPVDQ.

Belongs to the EPSP synthase family. MurA subfamily.

It is found in the cytoplasm. It carries out the reaction phosphoenolpyruvate + UDP-N-acetyl-alpha-D-glucosamine = UDP-N-acetyl-3-O-(1-carboxyvinyl)-alpha-D-glucosamine + phosphate. Its pathway is cell wall biogenesis; peptidoglycan biosynthesis. Functionally, cell wall formation. Adds enolpyruvyl to UDP-N-acetylglucosamine. This Janthinobacterium sp. (strain Marseille) (Minibacterium massiliensis) protein is UDP-N-acetylglucosamine 1-carboxyvinyltransferase.